We begin with the raw amino-acid sequence, 309 residues long: Serine/threonine-protein phosphatase 2A catalytic subunit beta isoform (309 aa).

4 residues coordinate Mn(2+): aspartate 57, histidine 59, aspartate 85, and asparagine 117. Catalysis depends on histidine 118, which acts as the Proton donor. 2 residues coordinate Mn(2+): histidine 167 and histidine 241. Tyrosine 307 is subject to Phosphotyrosine. Residue leucine 309 is modified to Leucine methyl ester.

Belongs to the PPP phosphatase family. PP-1 subfamily. Found in a complex with at least ARL2, PPP2CB, PPP2R1A, PPP2R2A, PPP2R5E and TBCD. Interacts with TBCD. PP2A consists of a common heterodimeric core enzyme (composed of a 36 kDa catalytic subunit (subunit C) and a 65 kDa constant regulatory subunit (PR65) (subunit A)) that associates with a variety of regulatory subunits. Proteins that associate with the core dimer include three families of regulatory subunits B (the R2/B/PR55/B55, R3/B''/PR72/PR130/PR59 and R5/B'/B56 families), the 48 kDa variable regulatory subunit, viral proteins, and cell signaling molecules. Binds PPME1. May indirectly interact with SGO1, most probably through regulatory B56 subunits. Interacts with CTTNBP2NL. Interacts with PTPA. Part of the core of STRIPAK complexes composed of PP2A catalytic and scaffolding subunits, the striatins (PP2A regulatory subunits), the striatin-associated proteins MOB4, STRIP1 and STRIP2, PDCD10 and members of the STE20 kinases, such as STK24 and STK26. Requires Mn(2+) as cofactor. Post-translationally, reversibly methyl esterified on Leu-309 by leucine carboxyl methyltransferase 1 (Lcmt1) and protein phosphatase methylesterase 1 (PPME1). Carboxyl methylation influences the affinity of the catalytic subunit for the different regulatory subunits, thereby modulating the PP2A holoenzyme's substrate specificity, enzyme activity and cellular localization. Phosphorylation of either threonine (by autophosphorylation-activated protein kinase) or tyrosine results in inactivation of the phosphatase. Auto-dephosphorylation has been suggested as a mechanism for reactivation. In terms of processing, may be monoubiquitinated by NOSIP.

The protein resides in the cytoplasm. It localises to the nucleus. It is found in the chromosome. The protein localises to the centromere. Its subcellular location is the cytoskeleton. The protein resides in the spindle pole. It catalyses the reaction O-phospho-L-seryl-[protein] + H2O = L-seryl-[protein] + phosphate. The enzyme catalyses O-phospho-L-threonyl-[protein] + H2O = L-threonyl-[protein] + phosphate. Catalytic subunit of protein phosphatase 2A (PP2A), a serine/threonine phosphatase involved in the regulation of a wide variety of enzymes, signal transduction pathways, and cellular events. PP2A can modulate the activity of phosphorylase B kinase, casein kinase 2, mitogen-stimulated S6 kinase, and MAP-2 kinase. Part of the striatin-interacting phosphatase and kinase (STRIPAK) complexes. STRIPAK complexes have critical roles in protein (de)phosphorylation and are regulators of multiple signaling pathways including Hippo, MAPK, nuclear receptor and cytoskeleton remodeling. Different types of STRIPAK complexes are involved in a variety of biological processes such as cell growth, differentiation, apoptosis, metabolism and immune regulation. This Oryctolagus cuniculus (Rabbit) protein is Serine/threonine-protein phosphatase 2A catalytic subunit beta isoform (PPP2CB).